A 250-amino-acid polypeptide reads, in one-letter code: Pyrroloquinoline-quinone synthase (250 aa).

It belongs to the PqqC family.

The catalysed reaction is 6-(2-amino-2-carboxyethyl)-7,8-dioxo-1,2,3,4,7,8-hexahydroquinoline-2,4-dicarboxylate + 3 O2 = pyrroloquinoline quinone + 2 H2O2 + 2 H2O + H(+). The protein operates within cofactor biosynthesis; pyrroloquinoline quinone biosynthesis. Its function is as follows. Ring cyclization and eight-electron oxidation of 3a-(2-amino-2-carboxyethyl)-4,5-dioxo-4,5,6,7,8,9-hexahydroquinoline-7,9-dicarboxylic-acid to PQQ. This chain is Pyrroloquinoline-quinone synthase, found in Xanthomonas campestris pv. campestris (strain 8004).